The following is a 264-amino-acid chain: Glutamate racemase (264 aa).

Residues 10–11 (DS) and 42–43 (YG) contribute to the substrate site. C73 functions as the Proton donor/acceptor in the catalytic mechanism. 74–75 (NT) lines the substrate pocket. C183 (proton donor/acceptor) is an active-site residue. Residue 184–185 (TH) coordinates substrate.

Belongs to the aspartate/glutamate racemases family.

The catalysed reaction is L-glutamate = D-glutamate. The protein operates within cell wall biogenesis; peptidoglycan biosynthesis. Provides the (R)-glutamate required for cell wall biosynthesis. This is Glutamate racemase from Streptococcus pyogenes serotype M18 (strain MGAS8232).